A 239-amino-acid polypeptide reads, in one-letter code: Ditrans,polycis-undecaprenyl-diphosphate synthase ((2E,6E)-farnesyl-diphosphate specific) (239 aa).

D18 is a catalytic residue. A Mg(2+)-binding site is contributed by D18. Residues 19 to 22 (GNGR), W23, R31, H35, and 63 to 65 (SSE) each bind substrate. N66 (proton acceptor) is an active-site residue. Substrate-binding positions include W67, R69, R186, and 192–194 (RIS). E205 is a binding site for Mg(2+).

It belongs to the UPP synthase family. As to quaternary structure, homodimer. It depends on Mg(2+) as a cofactor.

The enzyme catalyses 8 isopentenyl diphosphate + (2E,6E)-farnesyl diphosphate = di-trans,octa-cis-undecaprenyl diphosphate + 8 diphosphate. Its function is as follows. Catalyzes the sequential condensation of isopentenyl diphosphate (IPP) with (2E,6E)-farnesyl diphosphate (E,E-FPP) to yield (2Z,6Z,10Z,14Z,18Z,22Z,26Z,30Z,34E,38E)-undecaprenyl diphosphate (di-trans,octa-cis-UPP). UPP is the precursor of glycosyl carrier lipid in the biosynthesis of bacterial cell wall polysaccharide components such as peptidoglycan and lipopolysaccharide. This Haemophilus influenzae (strain ATCC 51907 / DSM 11121 / KW20 / Rd) protein is Ditrans,polycis-undecaprenyl-diphosphate synthase ((2E,6E)-farnesyl-diphosphate specific).